Reading from the N-terminus, the 559-residue chain is Oxygen-dependent choline dehydrogenase (559 aa).

4–33 (DYIIIGAGSAGNVLATRLTEDSDVTVLLLE) is a binding site for FAD. The Proton acceptor role is filled by His-473.

The protein belongs to the GMC oxidoreductase family. It depends on FAD as a cofactor.

The catalysed reaction is choline + A = betaine aldehyde + AH2. The enzyme catalyses betaine aldehyde + NAD(+) + H2O = glycine betaine + NADH + 2 H(+). The protein operates within amine and polyamine biosynthesis; betaine biosynthesis via choline pathway; betaine aldehyde from choline (cytochrome c reductase route): step 1/1. Its function is as follows. Involved in the biosynthesis of the osmoprotectant glycine betaine. Catalyzes the oxidation of choline to betaine aldehyde and betaine aldehyde to glycine betaine at the same rate. The chain is Oxygen-dependent choline dehydrogenase from Cronobacter sakazakii (strain ATCC BAA-894) (Enterobacter sakazakii).